We begin with the raw amino-acid sequence, 1036 residues long: Protein CLEC16A (1036 aa).

In terms of domain architecture, FPL spans 51 to 198; sequence IRSITEILIW…AVRTITLNVY (148 aa). Disordered regions lie at residues 375–416, 437–458, 876–967, and 1008–1036; these read SLEM…DAEK, GTSVQEQNTTDEEKSAATNSEN, HSSP…PSLL, and SQLPTLPAADTETPAEGAVNPEPAEPTEH. A compositionally biased stretch (basic residues) spans 381–392; it reads HKGKKRMQKRPN. Composition is skewed to low complexity over residues 877 to 891, 898 to 923, and 943 to 954; these read SSPSLSSPSPPFASG, STSHCDSGGSSSAPSATQSPADAPTT, and NSKPSKNSSARS.

Belongs to the CLEC16A/gop-1 family. As to quaternary structure, interacts with RNF41/NRDP1. Ubiquitously expressed. Expressed in pancreatic islets.

It localises to the endosome membrane. Its subcellular location is the lysosome membrane. Functionally, regulator of mitophagy through the upstream regulation of the RNF41/NRDP1-PRKN pathway. Mitophagy is a selective form of autophagy necessary for mitochondrial quality control. The RNF41/NRDP1-PRKN pathway regulates autophagosome-lysosome fusion during late mitophagy. May protect RNF41/NRDP1 from proteasomal degradation, RNF41/NRDP1 which regulates proteasomal degradation of PRKN. Plays a key role in beta cells functions by regulating mitophagy/autophagy and mitochondrial health. In Mus musculus (Mouse), this protein is Protein CLEC16A.